A 51-amino-acid chain; its full sequence is UPF0181 protein VVA0806 (51 aa).

This sequence belongs to the UPF0181 family.

The protein is UPF0181 protein VVA0806 of Vibrio vulnificus (strain YJ016).